The sequence spans 102 residues: Small ribosomal subunit protein uS10 (102 aa).

This sequence belongs to the universal ribosomal protein uS10 family. Part of the 30S ribosomal subunit.

Functionally, involved in the binding of tRNA to the ribosomes. This Clostridium botulinum (strain ATCC 19397 / Type A) protein is Small ribosomal subunit protein uS10.